The following is a 334-amino-acid chain: Holliday junction branch migration complex subunit RuvB (334 aa).

The interval 4-184 (ADRIISASPQ…FGIVQRLEFY (181 aa)) is large ATPase domain (RuvB-L). ATP-binding positions include Ile23, Arg24, Gly65, Lys68, Thr69, Thr70, 131 to 133 (EDY), Arg174, Tyr184, and Arg221. Thr69 serves as a coordination point for Mg(2+). The interval 185-255 (NVDDLTSIVK…IAKQALVMLD (71 aa)) is small ATPAse domain (RuvB-S). A head domain (RuvB-H) region spans residues 258–334 (PQGFDFMDIK…YAHLGISLSE (77 aa)). DNA is bound by residues Arg294, Arg313, and Arg318.

The protein belongs to the RuvB family. In terms of assembly, homohexamer. Forms an RuvA(8)-RuvB(12)-Holliday junction (HJ) complex. HJ DNA is sandwiched between 2 RuvA tetramers; dsDNA enters through RuvA and exits via RuvB. An RuvB hexamer assembles on each DNA strand where it exits the tetramer. Each RuvB hexamer is contacted by two RuvA subunits (via domain III) on 2 adjacent RuvB subunits; this complex drives branch migration. In the full resolvosome a probable DNA-RuvA(4)-RuvB(12)-RuvC(2) complex forms which resolves the HJ.

The protein resides in the cytoplasm. The enzyme catalyses ATP + H2O = ADP + phosphate + H(+). Functionally, the RuvA-RuvB-RuvC complex processes Holliday junction (HJ) DNA during genetic recombination and DNA repair, while the RuvA-RuvB complex plays an important role in the rescue of blocked DNA replication forks via replication fork reversal (RFR). RuvA specifically binds to HJ cruciform DNA, conferring on it an open structure. The RuvB hexamer acts as an ATP-dependent pump, pulling dsDNA into and through the RuvAB complex. RuvB forms 2 homohexamers on either side of HJ DNA bound by 1 or 2 RuvA tetramers; 4 subunits per hexamer contact DNA at a time. Coordinated motions by a converter formed by DNA-disengaged RuvB subunits stimulates ATP hydrolysis and nucleotide exchange. Immobilization of the converter enables RuvB to convert the ATP-contained energy into a lever motion, pulling 2 nucleotides of DNA out of the RuvA tetramer per ATP hydrolyzed, thus driving DNA branch migration. The RuvB motors rotate together with the DNA substrate, which together with the progressing nucleotide cycle form the mechanistic basis for DNA recombination by continuous HJ branch migration. Branch migration allows RuvC to scan DNA until it finds its consensus sequence, where it cleaves and resolves cruciform DNA. The chain is Holliday junction branch migration complex subunit RuvB from Haemophilus ducreyi (strain 35000HP / ATCC 700724).